Reading from the N-terminus, the 308-residue chain is Cell division protein FtsX (308 aa).

The Extracellular segment spans residues 1-24 (MISRFFRHLFEALKSLKRNGWMTV). The helical transmembrane segment at 25–45 (AAVSSVMITLTLVAIFASVIF) threads the bilayer. Over 46-178 (NTAKLATDIE…NTERLFKLAS (133 aa)) the chain is Cytoplasmic. Residues 179–199 (FIRVWGLGIAALLIFIAAFLI) form a helical membrane-spanning segment. Residues 200–236 (SNTIRITIISRSREIQIMRLVGAKNSYIRGPFLLEGA) lie on the Extracellular side of the membrane. The helical transmembrane segment at 237–257 (FIGLLGAIAPSVLVFIVYQIV) threads the bilayer. At 258 to 276 (YQSVNKSLVGQNLSMISPD) the chain is on the cytoplasmic side. A helical transmembrane segment spans residues 277–297 (LFSPLMIALLFVIGVFIGSLG). The Extracellular segment spans residues 298 to 308 (SGISMRRFLKI).

This sequence belongs to the ABC-4 integral membrane protein family. FtsX subfamily. As to quaternary structure, interacts with FtsE. Interacts (via large extracellular loop) with PcsB (via N-terminal coiled coil domain). This interaction directs PcsB to equatorial and septal sites of dividing cells.

It localises to the cell membrane. In terms of biological role, part of the ABC transporter FtsEX involved in asymmetric cellular division facilitating the initiation of sporulation. Required in maintaining normal growth and cellular morphology. The chain is Cell division protein FtsX from Streptococcus pneumoniae (strain ATCC BAA-255 / R6).